The following is a 65-amino-acid chain: Large ribosomal subunit protein bL35c (65 aa).

A disordered region spans residues Ser-18 to Val-50. Over residues Ile-22 to Leu-44 the composition is skewed to basic residues.

The protein belongs to the bacterial ribosomal protein bL35 family.

Its subcellular location is the plastid. It localises to the chloroplast. The sequence is that of Large ribosomal subunit protein bL35c from Porphyra purpurea (Red seaweed).